Consider the following 417-residue polypeptide: Tryptophan synthase beta chain (417 aa).

Lysine 110 carries the post-translational modification N6-(pyridoxal phosphate)lysine.

Belongs to the TrpB family. As to quaternary structure, tetramer of two alpha and two beta chains. It depends on pyridoxal 5'-phosphate as a cofactor.

It catalyses the reaction (1S,2R)-1-C-(indol-3-yl)glycerol 3-phosphate + L-serine = D-glyceraldehyde 3-phosphate + L-tryptophan + H2O. It participates in amino-acid biosynthesis; L-tryptophan biosynthesis; L-tryptophan from chorismate: step 5/5. The beta subunit is responsible for the synthesis of L-tryptophan from indole and L-serine. In Prochlorococcus marinus (strain NATL1A), this protein is Tryptophan synthase beta chain.